A 155-amino-acid chain; its full sequence is Cyanate hydratase (155 aa).

Catalysis depends on residues R101, E104, and S127.

It belongs to the cyanase family.

It carries out the reaction cyanate + hydrogencarbonate + 3 H(+) = NH4(+) + 2 CO2. Its function is as follows. Catalyzes the reaction of cyanate with bicarbonate to produce ammonia and carbon dioxide. This chain is Cyanate hydratase, found in Coccidioides posadasii (strain C735) (Valley fever fungus).